The primary structure comprises 229 residues: Large ribosomal subunit protein uL4 (229 aa).

The interval S62–V103 is disordered. Residues K82–R97 show a composition bias toward basic residues.

Belongs to the universal ribosomal protein uL4 family. Part of the 50S ribosomal subunit.

Its function is as follows. One of the primary rRNA binding proteins, this protein initially binds near the 5'-end of the 23S rRNA. It is important during the early stages of 50S assembly. It makes multiple contacts with different domains of the 23S rRNA in the assembled 50S subunit and ribosome. Forms part of the polypeptide exit tunnel. This is Large ribosomal subunit protein uL4 from Mycoplasmopsis synoviae (strain 53) (Mycoplasma synoviae).